A 163-amino-acid polypeptide reads, in one-letter code: Superoxide dismutase [Mn] (163 aa).

The Mn(2+) site is built by histidine 2, histidine 50, aspartate 134, and histidine 138.

Belongs to the iron/manganese superoxide dismutase family. It depends on Mn(2+) as a cofactor.

It carries out the reaction 2 superoxide + 2 H(+) = H2O2 + O2. In terms of biological role, destroys superoxide anion radicals which are normally produced within the cells and which are toxic to biological systems. The polypeptide is Superoxide dismutase [Mn] (sodA) (Mycobacterium kansasii).